Here is a 530-residue protein sequence, read N- to C-terminus: Ankyrin repeat domain-containing protein 53 (530 aa).

Over residues 1 to 15 the composition is skewed to low complexity; that stretch reads MASAGSTARRAGSGS. A disordered region spans residues 1 to 99; sequence MASAGSTARR…PSPSKESDQT (99 aa). Polar residues predominate over residues 32–41; it reads PSGSMQQANK. ANK repeat units follow at residues 139–169, 173–206, and 210–239; these read KGFT…PVDL, NSQT…DLNA, and NGST…NVHA. Disordered regions lie at residues 323 to 360 and 383 to 402; these read GHSL…VDAR and PTMW…QISH. Polar residues-rich tracts occupy residues 326 to 341 and 386 to 402; these read LVSN…LSKT and WNVS…QISH.

Interacts with PSRC1; recruited by PSRC1 to the spindle during mitosis. In terms of processing, phosphorylated during mitosis.

Its subcellular location is the cytoplasm. The protein localises to the cytoskeleton. It is found in the spindle. The protein resides in the spindle pole. Functionally, required for normal progression through mitosis. Involved in chromosome alignment and cytokinesis via regulation of microtubules polymerization. The polypeptide is Ankyrin repeat domain-containing protein 53 (ANKRD53) (Homo sapiens (Human)).